The primary structure comprises 783 residues: RNA exonuclease 5 (783 aa).

Residues 230-378 (LFGLDCEMCL…EDARTTLELA (149 aa)) form the Exonuclease domain. RRM domains are found at residues 503 to 577 (STVY…RPVT) and 598 to 677 (GTIY…RHLH).

The protein is RNA exonuclease 5 (REXO5) of Bos taurus (Bovine).